Consider the following 1477-residue polypeptide: Neuralized-like protein 4 (1477 aa).

Disordered stretches follow at residues 1-26 (MAEL…RKQP) and 168-196 (QPPP…RPDK). One can recognise an NHR 1 domain in the interval 1-167 (MAELHPRTGK…KCTQITVLSC (167 aa)). Over residues 171–183 (PEEEEEEDAEEQE) the composition is skewed to acidic residues. NHR domains follow at residues 250 to 417 (ALLF…IVHN), 450 to 616 (QLLF…IMDE), 645 to 813 (DLRF…LTGG), and 841 to 1010 (SHRF…TVSS). The disordered stretch occupies residues 1012-1041 (LLEEPDATKPPSITSESEEEEDPADHGDPH). An NHR 6 domain is found at 1048-1211 (SLQFLANHGK…QCEQVSIVTG (164 aa)).

In terms of processing, ubiquitinated. This ubiquitination leads to proteasomal degradation.

Its subcellular location is the cytoplasm. It is found in the cytoskeleton. The protein resides in the microtubule organizing center. The protein localises to the centrosome. It localises to the centriole. Promotes CCP110 ubiquitination and proteasome-dependent degradation. By counteracting accumulation of CP110, maintains normal centriolar homeostasis and preventing formation of ectopic microtubular organizing centers. The sequence is that of Neuralized-like protein 4 (neurl4) from Xenopus tropicalis (Western clawed frog).